A 160-amino-acid chain; its full sequence is Large ribosomal subunit protein uL10 (160 aa).

The protein belongs to the universal ribosomal protein uL10 family. Part of the ribosomal stalk of the 50S ribosomal subunit. The N-terminus interacts with L11 and the large rRNA to form the base of the stalk. The C-terminus forms an elongated spine to which L12 dimers bind in a sequential fashion forming a multimeric L10(L12)X complex.

Functionally, forms part of the ribosomal stalk, playing a central role in the interaction of the ribosome with GTP-bound translation factors. The protein is Large ribosomal subunit protein uL10 of Ehrlichia canis (strain Jake).